The chain runs to 437 residues: GTPase Der (437 aa).

EngA-type G domains lie at 2–167 (ATVL…EKKG) and 180–356 (IRVA…NSLF). GTP contacts are provided by residues 8 to 15 (GKSNVGKS), 55 to 59 (DTCGI), 118 to 121 (NKSE), 186 to 193 (GRPNAGKS), 233 to 237 (DTAGL), and 299 to 302 (NKID). The KH-like domain maps to 357 to 437 (YRVQTSAVNA…PIFLKFKNRH (81 aa)).

It belongs to the TRAFAC class TrmE-Era-EngA-EngB-Septin-like GTPase superfamily. EngA (Der) GTPase family. In terms of assembly, associates with the 50S ribosomal subunit.

Functionally, GTPase that plays an essential role in the late steps of ribosome biogenesis. In Thermosipho melanesiensis (strain DSM 12029 / CIP 104789 / BI429), this protein is GTPase Der.